Here is a 540-residue protein sequence, read N- to C-terminus: Zinc finger protein 768 (540 aa).

Disordered regions lie at residues 1 to 166 (MERE…FEAQ) and 239 to 258 (TGAL…GQGP). Phosphoserine is present on residues Ser17, Ser18, and Ser23. Residue Tyr27 is modified to Phosphotyrosine. Ser33 carries the post-translational modification Phosphoserine. Over residues 34-53 (ENEEEEISQQEGSGDYEVEE) the composition is skewed to acidic residues. Phosphoserine occurs at positions 62, 69, 76, 83, 90, 97, 104, 107, 111, 118, and 125. The span at 62–77 (SPGFEPQSPEFEPQSP) shows a compositional bias: low complexity. Residues 107–119 (SDSQSPEFESQSP) are compositionally biased toward polar residues. Residue Tyr128 is modified to Phosphotyrosine. The residue at position 132 (Ser132) is a Phosphoserine. Tyr135 is subject to Phosphotyrosine. A Phosphoserine modification is found at Ser139. The residue at position 142 (Tyr142) is a Phosphotyrosine. Phosphoserine is present on residues Ser144 and Ser147. The span at 149–166 (YESQNTELKTQSPEFEAQ) shows a compositional bias: polar residues. Phosphothreonine is present on Thr158. A Phosphoserine modification is found at Ser160. The segment at 261–283 (NICGICGKSFGRGSTLIQHQRIH) adopts a C2H2-type 1 zinc-finger fold. Thr284 bears the Phosphothreonine mark. Tyr289 is modified (phosphotyrosine). 4 consecutive C2H2-type zinc fingers follow at residues 289 to 311 (YKCE…QRTH), 317 to 339 (YKCP…QRTH), 345 to 367 (YKCP…QRTH), and 373 to 395 (YSCT…QRVH). 2 positions are modified to phosphoserine: Ser295 and Ser299. Residue Thr396 is modified to Phosphothreonine. C2H2-type zinc fingers lie at residues 401 to 423 (FSCG…ARSH), 429 to 451 (FKCP…ARTH), 457 to 479 (YSCP…QRSH), 485 to 507 (YRCA…HRVH), and 513 to 535 (YKCD…QRTH). Phosphoserine is present on Ser442.

Belongs to the krueppel C2H2-type zinc-finger protein family. As to quaternary structure, interacts (via zinc-finger domains) with TP53 (via N-terminus); interaction might be facilitated by TP53 oligomerization state. Interacts with ELP3. In terms of processing, may be phosphorylated at residue 'Ser-5' of the tandem heptapeptide repeats in the N-terminus. Phosphorylation might be increased upon RAS pathway activation and negatively regulate protein stability.

The protein localises to the nucleus. Its subcellular location is the chromosome. In terms of biological role, binds to mammalian-wide interspersed repeat (MIRs) sequences in euchromatin and promoter regions of genes at the consensus sequence 5'-GCTGTGTG-[N20]-CCTCTCTG-3', consisting of two anchor regions connected by a linker region; the linker region probably does not contribute to the binding specificity. Required for cell homeostasis. May be involved in transcriptional regulation. This Homo sapiens (Human) protein is Zinc finger protein 768 (ZNF768).